The following is a 307-amino-acid chain: Homoserine kinase (307 aa).

Residue 85–95 participates in ATP binding; that stretch reads PLTRGLGSSAA.

Belongs to the GHMP kinase family. Homoserine kinase subfamily.

It localises to the cytoplasm. It catalyses the reaction L-homoserine + ATP = O-phospho-L-homoserine + ADP + H(+). Its pathway is amino-acid biosynthesis; L-threonine biosynthesis; L-threonine from L-aspartate: step 4/5. Its function is as follows. Catalyzes the ATP-dependent phosphorylation of L-homoserine to L-homoserine phosphate. The sequence is that of Homoserine kinase from Caldicellulosiruptor bescii (strain ATCC BAA-1888 / DSM 6725 / KCTC 15123 / Z-1320) (Anaerocellum thermophilum).